Reading from the N-terminus, the 301-residue chain is MNQPIRQLALIGPTASGKTALAIKAAQALDAHILSIDSLSIYKEIDIVSAKPTKEEQKGIKHFGIDFIAPNEDFDVTTFIRLYEDVHVRAVADNKNLVIVGGTSFYLKMLMEGISKLPKISETTKRRTTEALRDLQKSHEWLSTLDPDYMQKISSSDPYRIEKALDIYFETGTCPTEYFKAFPPKPTIQSELPIYQIETDRELLRKRISLRTQMMLEDGLIDEICMLEEKYTRAPNCMKAIGIKETLAYLDGIYEREMLKEKITVNTARLAKRQTTFNHSQFDNVIKGSVSELEKILLQGA.

12 to 19 is a binding site for ATP; sequence GPTASGKT. A substrate-binding site is contributed by 14–19; the sequence is TASGKT. The interaction with substrate tRNA stretch occupies residues 37–40; it reads DSLS.

The protein belongs to the IPP transferase family. Monomer. It depends on Mg(2+) as a cofactor.

It carries out the reaction adenosine(37) in tRNA + dimethylallyl diphosphate = N(6)-dimethylallyladenosine(37) in tRNA + diphosphate. Its function is as follows. Catalyzes the transfer of a dimethylallyl group onto the adenine at position 37 in tRNAs that read codons beginning with uridine, leading to the formation of N6-(dimethylallyl)adenosine (i(6)A). This Sulfurovum sp. (strain NBC37-1) protein is tRNA dimethylallyltransferase.